The chain runs to 261 residues: MRMTKRVLIAGFTGAMGQKAVNLVNSLSDFKIVAGLSPSAENDPQKYNLPEDAQIFNSLDEIPDNLTDIWIDFTLPKAVYNNVKFALTHHISPIVGTTGLSDGQEAELIEISKEEKVGGIIAPNFGISAVLLMKFAKEAAKYFPDVEIIEMHHADKKDAPSGTALATAKMIAENRPAHQTAPDEVETLENVRGGDYEGIKIHSVRLPGYVAHEQVLFGGTGEALTIRQDSFDRQSFMSGVKVALEKVDQLNELVVGLENIL.

NAD(+)-binding positions include 11-16, 96-98, and 122-125; these read GFTGAM, GTT, and APNF. The Proton donor/acceptor role is filled by His152. Position 153 (His153) interacts with (S)-2,3,4,5-tetrahydrodipicolinate. The active-site Proton donor is Lys156. Residue 162–163 coordinates (S)-2,3,4,5-tetrahydrodipicolinate; that stretch reads GT.

The protein belongs to the DapB family.

The protein localises to the cytoplasm. It carries out the reaction (S)-2,3,4,5-tetrahydrodipicolinate + NAD(+) + H2O = (2S,4S)-4-hydroxy-2,3,4,5-tetrahydrodipicolinate + NADH + H(+). The catalysed reaction is (S)-2,3,4,5-tetrahydrodipicolinate + NADP(+) + H2O = (2S,4S)-4-hydroxy-2,3,4,5-tetrahydrodipicolinate + NADPH + H(+). The protein operates within amino-acid biosynthesis; L-lysine biosynthesis via DAP pathway; (S)-tetrahydrodipicolinate from L-aspartate: step 4/4. Its function is as follows. Catalyzes the conversion of 4-hydroxy-tetrahydrodipicolinate (HTPA) to tetrahydrodipicolinate. The chain is 4-hydroxy-tetrahydrodipicolinate reductase from Lactobacillus acidophilus (strain ATCC 700396 / NCK56 / N2 / NCFM).